A 204-amino-acid polypeptide reads, in one-letter code: uncharacterized protein (204 aa).

The first 17 residues, 1-17 (MKRLVTGLLALSLFLAA), serve as a signal peptide directing secretion. The segment at 17 to 102 (ACGQDSDQQK…NQSSNNQKSS (86 aa)) is disordered. Cys18 is lipidated: N-palmitoyl cysteine. Cys18 carries the S-diacylglycerol cysteine lipid modification. A compositionally biased stretch (basic and acidic residues) spans 23–70 (DQQKDSNKEKDDKAKTEQQDKKTNDSSKDKKDNKDDSKDVNKDNKDNS). The span at 71–102 (ANDNQQQSNSNATNNDQNQTNNNQSSNNQKSS) shows a compositional bias: low complexity.

Its subcellular location is the cell membrane. This is an uncharacterized protein from Staphylococcus aureus (strain Mu50 / ATCC 700699).